Here is a 482-residue protein sequence, read N- to C-terminus: tRNA sulfurtransferase (482 aa).

Positions L61–R165 constitute a THUMP domain. Residues L183–I184, K265, G287, and Q296 contribute to the ATP site. Residues C344 and C456 are joined by a disulfide bond. A Rhodanese domain is found at F404–P482. The active-site Cysteine persulfide intermediate is C456.

This sequence belongs to the ThiI family.

It is found in the cytoplasm. The catalysed reaction is [ThiI sulfur-carrier protein]-S-sulfanyl-L-cysteine + a uridine in tRNA + 2 reduced [2Fe-2S]-[ferredoxin] + ATP + H(+) = [ThiI sulfur-carrier protein]-L-cysteine + a 4-thiouridine in tRNA + 2 oxidized [2Fe-2S]-[ferredoxin] + AMP + diphosphate. It catalyses the reaction [ThiS sulfur-carrier protein]-C-terminal Gly-Gly-AMP + S-sulfanyl-L-cysteinyl-[cysteine desulfurase] + AH2 = [ThiS sulfur-carrier protein]-C-terminal-Gly-aminoethanethioate + L-cysteinyl-[cysteine desulfurase] + A + AMP + 2 H(+). It participates in cofactor biosynthesis; thiamine diphosphate biosynthesis. Functionally, catalyzes the ATP-dependent transfer of a sulfur to tRNA to produce 4-thiouridine in position 8 of tRNAs, which functions as a near-UV photosensor. Also catalyzes the transfer of sulfur to the sulfur carrier protein ThiS, forming ThiS-thiocarboxylate. This is a step in the synthesis of thiazole, in the thiamine biosynthesis pathway. The sulfur is donated as persulfide by IscS. This chain is tRNA sulfurtransferase, found in Salmonella enteritidis PT4 (strain P125109).